The chain runs to 61 residues: Alpha-conotoxin CnIJ (61 aa).

Positions 1 to 17 (MMFTVFLLVVLTTTVVS) are cleaved as a signal peptide. Positions 18–44 (FPSDSASDGRDDEAKDERSDMYELKRN) are excised as a propeptide. 2 cysteine pairs are disulfide-bonded: cysteine 47/cysteine 52 and cysteine 48/cysteine 59. Position 59 is a cysteine amide (cysteine 59).

It belongs to the conotoxin A superfamily. In terms of tissue distribution, expressed by the venom duct.

It localises to the secreted. The polypeptide is Alpha-conotoxin CnIJ (Conus consors (Singed cone)).